Here is a 208-residue protein sequence, read N- to C-terminus: ATP phosphoribosyltransferase (208 aa).

Belongs to the ATP phosphoribosyltransferase family. Short subfamily. Heteromultimer composed of HisG and HisZ subunits.

Its subcellular location is the cytoplasm. It carries out the reaction 1-(5-phospho-beta-D-ribosyl)-ATP + diphosphate = 5-phospho-alpha-D-ribose 1-diphosphate + ATP. It participates in amino-acid biosynthesis; L-histidine biosynthesis; L-histidine from 5-phospho-alpha-D-ribose 1-diphosphate: step 1/9. Functionally, catalyzes the condensation of ATP and 5-phosphoribose 1-diphosphate to form N'-(5'-phosphoribosyl)-ATP (PR-ATP). Has a crucial role in the pathway because the rate of histidine biosynthesis seems to be controlled primarily by regulation of HisG enzymatic activity. This is ATP phosphoribosyltransferase from Thermotoga petrophila (strain ATCC BAA-488 / DSM 13995 / JCM 10881 / RKU-1).